The chain runs to 221 residues: Protein-L-isoaspartate O-methyltransferase (221 aa).

S64 is an active-site residue.

The protein belongs to the methyltransferase superfamily. L-isoaspartyl/D-aspartyl protein methyltransferase family.

The protein resides in the cytoplasm. The catalysed reaction is [protein]-L-isoaspartate + S-adenosyl-L-methionine = [protein]-L-isoaspartate alpha-methyl ester + S-adenosyl-L-homocysteine. In terms of biological role, catalyzes the methyl esterification of L-isoaspartyl residues in peptides and proteins that result from spontaneous decomposition of normal L-aspartyl and L-asparaginyl residues. It plays a role in the repair and/or degradation of damaged proteins. The polypeptide is Protein-L-isoaspartate O-methyltransferase (Cytophaga hutchinsonii (strain ATCC 33406 / DSM 1761 / CIP 103989 / NBRC 15051 / NCIMB 9469 / D465)).